The following is a 243-amino-acid chain: tRNA (guanine-N(1)-)-methyltransferase (243 aa).

Residues glycine 108 and 127–132 (LGDFVL) contribute to the S-adenosyl-L-methionine site.

The protein belongs to the RNA methyltransferase TrmD family. In terms of assembly, homodimer.

Its subcellular location is the cytoplasm. It catalyses the reaction guanosine(37) in tRNA + S-adenosyl-L-methionine = N(1)-methylguanosine(37) in tRNA + S-adenosyl-L-homocysteine + H(+). In terms of biological role, specifically methylates guanosine-37 in various tRNAs. In Streptococcus pyogenes serotype M5 (strain Manfredo), this protein is tRNA (guanine-N(1)-)-methyltransferase.